The sequence spans 380 residues: Adaptive-response sensory kinase SasA (380 aa).

A kaiB-like domain, interacts with KaiC region spans residues 20-101 (LLFVANRPGD…QKVDYWWPRW (82 aa)). The Histidine kinase domain maps to 157-380 (LLAHELRNPL…CFHFTLPVYS (224 aa)). A Phosphohistidine; by autocatalysis modification is found at His-160.

In terms of assembly, homotrimer with a small amount of possible homohexamer; a protein fragment of 109-380 is also a homotrimer. Interacts with KaiC, probably as 1 SasA trimer:1 KaiC homohexamer; unphosphorylated SasA has the highest affinity. Homodimer. Binds to the B-loop in the CI domain of KaiC; SasA and KaiB(fs) compete to bind to the CI domain. Binds preferentially to doubly phosphorylated KaiC. Post-translationally, autophosphorylates, probably on His-160.

It carries out the reaction ATP + protein L-histidine = ADP + protein N-phospho-L-histidine.. Functionally, member of the two-component regulatory system SasA/RpaA involved in genome-wide circadian gene expression. One of several clock output pathways. Participates in the Kai clock protein complex, the main circadian regulator in cyanobacteria, via its interaction with KaiC. KaiC enhances the autophosphorylation activity of SasA, which then transfers its phosphate group to RpaA to activate it. In addition to its output function, recruits fold-shifted KaiB (KaiB(fs)) to KaiC to cooperatively form the KaiB(6):KaiC(6) complex (independent of SasA kinase activity). Required for robustness of the circadian rhythm of gene expression and is involved in clock output, also required for adaptation to light/dark cycles. This Thermosynechococcus vestitus (strain NIES-2133 / IAM M-273 / BP-1) protein is Adaptive-response sensory kinase SasA.